The primary structure comprises 261 residues: Cytochrome c oxidase subunit 3 (261 aa).

The Mitochondrial matrix portion of the chain corresponds to 2 to 15 (THQTHAYHMVNPSP). A helical transmembrane segment spans residues 16–34 (WPLTGALSALLLTSGLVMW). Residues 35-40 (FHYNST) lie on the Mitochondrial intermembrane side of the membrane. The helical transmembrane segment at 41-66 (ILLSLGLLTNILTMYQWWRDIIREGT) threads the bilayer. Over 67–72 (YQGHHT) the chain is Mitochondrial matrix. A helical transmembrane segment spans residues 73 to 105 (PIVQKGLRYGMILFIVSEVFFFAGFFWAFYHSS). The Mitochondrial intermembrane segment spans residues 106–128 (LVPTHDLGGCWPPTGITPLNPLE). A helical transmembrane segment spans residues 129 to 152 (VPLLNTSVLLASGVSITWAHHSLM). At 153–155 (EGN) the chain is on the mitochondrial matrix side. A helical transmembrane segment spans residues 156-183 (RNHMNQALLITILLGLYFTILQASEYFE). Residues 184-190 (TSFSISD) lie on the Mitochondrial intermembrane side of the membrane. The chain crosses the membrane as a helical span at residues 191–223 (GIYGSTFFMATGFHGLHVIIGSTFLIVCLLRQL). The Mitochondrial matrix segment spans residues 224 to 232 (KFHFTSKHH). The helical transmembrane segment at 233–256 (FGFEAAAWYWHFVDVVWLFLYVSI) threads the bilayer. Residues 257-261 (YWWGS) lie on the Mitochondrial intermembrane side of the membrane.

This sequence belongs to the cytochrome c oxidase subunit 3 family. As to quaternary structure, component of the cytochrome c oxidase (complex IV, CIV), a multisubunit enzyme composed of 14 subunits. The complex is composed of a catalytic core of 3 subunits MT-CO1, MT-CO2 and MT-CO3, encoded in the mitochondrial DNA, and 11 supernumerary subunits COX4I, COX5A, COX5B, COX6A, COX6B, COX6C, COX7A, COX7B, COX7C, COX8 and NDUFA4, which are encoded in the nuclear genome. The complex exists as a monomer or a dimer and forms supercomplexes (SCs) in the inner mitochondrial membrane with NADH-ubiquinone oxidoreductase (complex I, CI) and ubiquinol-cytochrome c oxidoreductase (cytochrome b-c1 complex, complex III, CIII), resulting in different assemblies (supercomplex SCI(1)III(2)IV(1) and megacomplex MCI(2)III(2)IV(2)).

Its subcellular location is the mitochondrion inner membrane. The enzyme catalyses 4 Fe(II)-[cytochrome c] + O2 + 8 H(+)(in) = 4 Fe(III)-[cytochrome c] + 2 H2O + 4 H(+)(out). Component of the cytochrome c oxidase, the last enzyme in the mitochondrial electron transport chain which drives oxidative phosphorylation. The respiratory chain contains 3 multisubunit complexes succinate dehydrogenase (complex II, CII), ubiquinol-cytochrome c oxidoreductase (cytochrome b-c1 complex, complex III, CIII) and cytochrome c oxidase (complex IV, CIV), that cooperate to transfer electrons derived from NADH and succinate to molecular oxygen, creating an electrochemical gradient over the inner membrane that drives transmembrane transport and the ATP synthase. Cytochrome c oxidase is the component of the respiratory chain that catalyzes the reduction of oxygen to water. Electrons originating from reduced cytochrome c in the intermembrane space (IMS) are transferred via the dinuclear copper A center (CU(A)) of subunit 2 and heme A of subunit 1 to the active site in subunit 1, a binuclear center (BNC) formed by heme A3 and copper B (CU(B)). The BNC reduces molecular oxygen to 2 water molecules using 4 electrons from cytochrome c in the IMS and 4 protons from the mitochondrial matrix. The protein is Cytochrome c oxidase subunit 3 of Rattus norvegicus (Rat).